The sequence spans 185 residues: uncharacterized protein (185 aa).

Transmembrane regions (helical) follow at residues 4–24, 54–74, 98–118, 119–139, and 153–173; these read TYLT…SLSI, LALF…LKLI, LRMG…LLQN, VIWI…FTVY, and FILL…FIFI.

It localises to the cell membrane. This is an uncharacterized protein from Bacillus subtilis (strain 168).